A 252-amino-acid chain; its full sequence is Short chain dehydrogenase andC (252 aa).

A signal peptide spans 1 to 25; it reads MGFLQDKVVIITGAAAGIGLATATA. Isoleucine 11, aspartate 57, and arginine 119 together coordinate NADP(+). Serine 137 functions as the Proton donor in the catalytic mechanism. Residues tyrosine 151 and lysine 155 each contribute to the NADP(+) site. Tyrosine 151 functions as the Proton acceptor in the catalytic mechanism. Lysine 155 serves as the catalytic Lowers pKa of active site Tyr.

It belongs to the short-chain dehydrogenases/reductases (SDR) family.

It functions in the pathway secondary metabolite biosynthesis; terpenoid biosynthesis. Functionally, short chain dehydrogenase; part of the gene cluster that mediates the biosynthesis of anditomin, a fungal meroterpenoid. The first step of the pathway is the synthesis of 3,5-dimethylorsellinic acid (DMOA) by the polyketide synthase andM. DMOA is then converted to the phthalide compound 5,7-dihydroxy-4,6-dimethylphthalide (DHDMP) by the cytochrome P450 monooxygenase andK, which is further prenylated by the prenyltransferase andD to yield farnesyl-DHDMP. Further epoxidation by the FAD-dependent monooxygenase andE leads to epoxyfarnesyl-DHDMP. The next step involves the terpene cyclase andB that converts epoxyfarnesyl-DHDMP into preandiloid A through opening of the epoxide ring followed by the cyclization of the farnesyl moiety. Preandiloid A is in turn oxidized at the C-3 hydroxyl group to yield preandiloid B by the dehydrogenase andC. The dioxygenase andA is solely responsible for the dehydrogenation of preandiloid B leading to the enone preandiloid C, as well as for the intriguing structural rearrangement to generate the bicyclo[2.2.2]octane core, transforming preandiloid C into andiconin. FAD-binding monooxygenase andJ then produces andilesin D which is reduced by dehydrogenase andI to yield andilesin A. Action of acetyltransferase andG followed by a spontaneous acetate elimination leads then to andilesin B, which is in turn substrate of the short chain dehydrogenase andH to yield andilesin C. Finally, the dioxygenase andF catalyzes the transformation of andilesin C to anditomin. The polypeptide is Short chain dehydrogenase andC (Emericella variicolor (Aspergillus stellatus)).